Consider the following 157-residue polypeptide: Cell number regulator 10 (157 aa).

A run of 2 helical transmembrane segments spans residues 41 to 57 (DCGL…ITFG) and 66 to 83 (GATS…LAYF).

It belongs to the cornifelin family. In terms of tissue distribution, expressed in roots, leaves, stalks, immature ears and silks.

It localises to the membrane. The chain is Cell number regulator 10 (CNR10) from Zea mays (Maize).